The chain runs to 341 residues: Phosphoribosylformylglycinamidine cyclo-ligase (341 aa).

The protein belongs to the AIR synthase family.

The protein resides in the cytoplasm. The enzyme catalyses 2-formamido-N(1)-(5-O-phospho-beta-D-ribosyl)acetamidine + ATP = 5-amino-1-(5-phospho-beta-D-ribosyl)imidazole + ADP + phosphate + H(+). It functions in the pathway purine metabolism; IMP biosynthesis via de novo pathway; 5-amino-1-(5-phospho-D-ribosyl)imidazole from N(2)-formyl-N(1)-(5-phospho-D-ribosyl)glycinamide: step 2/2. The protein is Phosphoribosylformylglycinamidine cyclo-ligase of Xanthomonas campestris pv. campestris (strain B100).